The following is a 194-amino-acid chain: Insertion element IS136 uncharacterized 21.2 kDa protein (194 aa).

A disordered region spans residues 73–103 (SCDRACAPTPGRDPPVSSLPNSRQPARQNPR). Polar residues predominate over residues 90–103 (SLPNSRQPARQNPR).

This chain is Insertion element IS136 uncharacterized 21.2 kDa protein, found in Agrobacterium tumefaciens (strain T37).